The sequence spans 563 residues: Probable CoA ligase CCL11 (563 aa).

ATP is bound by residues 195-203 (TSGTTSSPK), 328-333 (HGYGMT), aspartate 426, 438-441 (IKDR), and lysine 534. An SBD1 region spans residues 263–328 (DGEIIFNLIR…TESLGFVISH (66 aa)). Residues 329-405 (GYGMTEMLGV…LKGSSIMLGY (77 aa)) form an SBD2 region.

Belongs to the ATP-dependent AMP-binding enzyme family.

It localises to the cytoplasm. The protein resides in the cytosol. The sequence is that of Probable CoA ligase CCL11 from Humulus lupulus (European hop).